Consider the following 179-residue polypeptide: MSRIGYKTIVIPEGVTVTRDEDVITVKGPKGELSETFSPDVAMNVNGNEINFEPTGKYDNKMCALHGTQRANLANMIEGVEKGFNKTLKLVGVGYRTQLKGSDLILNVGYSNPVDVKVPEDIDVKVPDNTTIEIAGINKQHVGDFAAKVREIRSPEPYKGKGIRYENEHITLREGKTGK.

This sequence belongs to the universal ribosomal protein uL6 family. As to quaternary structure, part of the 50S ribosomal subunit.

This protein binds to the 23S rRNA, and is important in its secondary structure. It is located near the subunit interface in the base of the L7/L12 stalk, and near the tRNA binding site of the peptidyltransferase center. The sequence is that of Large ribosomal subunit protein uL6 from Fructilactobacillus sanfranciscensis (Lactobacillus sanfranciscensis).